Reading from the N-terminus, the 101-residue chain is MTALAEILGCYFPYLILKEGKTHWLWLPAIISLAVFVWLLTLHPAASGRIYAAYGGIYIFTALMWLRFIDQVTLTRWDIWGGTVVLLGAALIILQPQGLLK.

Transmembrane regions (helical) follow at residues Trp-24–Pro-44, Ile-50–Asp-70, and Ile-79–Leu-99.

The protein belongs to the UPF0060 family.

The protein resides in the cell inner membrane. This chain is UPF0060 membrane protein ACIAD1364, found in Acinetobacter baylyi (strain ATCC 33305 / BD413 / ADP1).